Consider the following 424-residue polypeptide: Tyrosine--tRNA ligase (424 aa).

Tyr-37 is an L-tyrosine binding site. The 'HIGH' region signature appears at Pro-42–His-51. Tyr-175 and Gln-179 together coordinate L-tyrosine. A 'KMSKS' region motif is present at residues Lys-235–Thr-239. Lys-238 lines the ATP pocket. In terms of domain architecture, S4 RNA-binding spans Ala-357–Gly-414.

It belongs to the class-I aminoacyl-tRNA synthetase family. TyrS type 1 subfamily. As to quaternary structure, homodimer.

It is found in the cytoplasm. The enzyme catalyses tRNA(Tyr) + L-tyrosine + ATP = L-tyrosyl-tRNA(Tyr) + AMP + diphosphate + H(+). In terms of biological role, catalyzes the attachment of tyrosine to tRNA(Tyr) in a two-step reaction: tyrosine is first activated by ATP to form Tyr-AMP and then transferred to the acceptor end of tRNA(Tyr). The sequence is that of Tyrosine--tRNA ligase from Yersinia enterocolitica serotype O:8 / biotype 1B (strain NCTC 13174 / 8081).